The chain runs to 295 residues: CRISPR system Cmr endoribonuclease Cmr4 (295 aa).

Belongs to the CRISPR system Cmr4 family. Forms oligomers in isolation. Part of the type III-B Cmr ribonucleoprotein (RNP) complex, an elongated RNP with Cmr2 and Cmr3 as the base, with Cmr4 and Cmr5 forming a helical core along the mature crRNA (39 or 45 nt in length), while the complex is capped by Cmr6 and Cmr1. The 5' end of the crRNA is bound to Cmr2 and Cmr3, while Cmr6 and a Cmr1 subunit (Cmr1-1 or Cmr1-2) cap the 3' end of the crRNA. The target RNA lies anti-parallel to the crRNA, with its 5' end near Cmr1 and Cmr6 and its 3' end near Cmr2 and Cmr3; major target RNA cleavage occurs nears the junction of Cmr1/Cmr6 and Cmr4/Cmr5, with minor cleavage occurring at 6 nt intervals which coincide with the proposed spacing of Cmr4 subunits. Interacts with Cmr5. Interacts with Cmr2, Cmr3, Cmr5 and Cmr6.

It is found in the cytoplasm. Its function is as follows. CRISPR (clustered regularly interspaced short palindromic repeat), is an adaptive immune system that provides protection against mobile genetic elements (viruses, transposable elements and conjugative plasmids). CRISPR clusters contain sequences complementary to antecedent mobile elements and target invading nucleic acids. CRISPR clusters are transcribed and processed into CRISPR RNA (crRNA), formerly called psiRNA (prokaryotic silencing) in this organism. Part of the Cmr ribonucleoprotein complex which has divalent cation-dependent endoribonuclease activity specific for ssRNA complementary to the crRNA (target RNA), generating 5' hydroxy- and 3' phosphate or 2'-3' cyclic phosphate termini. This is probably the subunit that cleaves the target RNA. Cmr complex does not cleave ssDNA complementary to the crRNA. Cleavage of target RNA is guided by the crRNA; substrate cleavage occurs a fixed distance (14 nt) from the 3' end of the crRNA. In vitro reconstitution shows Cmr1-2 and Cmr5 are not absolutely necessary for target cleavage. This chain is CRISPR system Cmr endoribonuclease Cmr4, found in Pyrococcus furiosus (strain ATCC 43587 / DSM 3638 / JCM 8422 / Vc1).